A 277-amino-acid chain; its full sequence is MEFKAFIEITRPHNCLLAGIVGVLGSIVAAGGLPELKTAILVFLVVFLGCAGGNTINDYFDYEIDKINRPERPLPRGAMSRKAALWYSVALFATGIVLAWFINIWDFLLAIVAYVTMFIYAWKLKPMPFIGNVVVASLTGATPLYGAIAVGEIGLAGTLALCAFLVNVAREVIKDIEDIEGDMAKGAKTLPILIGRKRAAYVGALFAILTVVASFLPIKAGIGLGYLAMLPVDAVILYSAFLILRSQDRETAHRAQILLKVSVFLAVVAFLIASLVR.

8 helical membrane-spanning segments follow: residues 16 to 36, 40 to 60, 83 to 105, 107 to 124, 146 to 166, 202 to 222, 224 to 244, and 256 to 276; these read LLAG…LPEL, ILVF…NDYF, AALW…INIW, FLLA…AWKL, GAIA…AFLV, VGAL…KAGI, LGYL…FLIL, and QILL…ASLV.

Belongs to the UbiA prenyltransferase family. DGGGP synthase subfamily. Mg(2+) is required as a cofactor.

Its subcellular location is the cell membrane. It carries out the reaction sn-3-O-(geranylgeranyl)glycerol 1-phosphate + (2E,6E,10E)-geranylgeranyl diphosphate = 2,3-bis-O-(geranylgeranyl)-sn-glycerol 1-phosphate + diphosphate. Its pathway is membrane lipid metabolism; glycerophospholipid metabolism. In terms of biological role, prenyltransferase that catalyzes the transfer of the geranylgeranyl moiety of geranylgeranyl diphosphate (GGPP) to the C2 hydroxyl of (S)-3-O-geranylgeranylglyceryl phosphate (GGGP). This reaction is the second ether-bond-formation step in the biosynthesis of archaeal membrane lipids. This is Digeranylgeranylglyceryl phosphate synthase from Thermococcus kodakarensis (strain ATCC BAA-918 / JCM 12380 / KOD1) (Pyrococcus kodakaraensis (strain KOD1)).